Reading from the N-terminus, the 117-residue chain is Large ribosomal subunit protein bL20 (117 aa).

Belongs to the bacterial ribosomal protein bL20 family.

Functionally, binds directly to 23S ribosomal RNA and is necessary for the in vitro assembly process of the 50S ribosomal subunit. It is not involved in the protein synthesizing functions of that subunit. This chain is Large ribosomal subunit protein bL20, found in Idiomarina loihiensis (strain ATCC BAA-735 / DSM 15497 / L2-TR).